Here is a 100-residue protein sequence, read N- to C-terminus: Small ribosomal subunit protein bS6 (100 aa).

Belongs to the bacterial ribosomal protein bS6 family.

Functionally, binds together with bS18 to 16S ribosomal RNA. This is Small ribosomal subunit protein bS6 from Tropheryma whipplei (strain Twist) (Whipple's bacillus).